A 329-amino-acid chain; its full sequence is GTP 3',8-cyclase (329 aa).

The region spanning 8 to 234 (AFARKFYYLR…QLRQRSDGPA (227 aa)) is the Radical SAM core domain. GTP is bound at residue Arg17. Residues Cys24 and Cys28 each contribute to the [4Fe-4S] cluster site. Residue Tyr30 coordinates S-adenosyl-L-methionine. A [4Fe-4S] cluster-binding site is contributed by Cys31. Arg68 contributes to the GTP binding site. Gly72 contacts S-adenosyl-L-methionine. A GTP-binding site is contributed by Thr99. Ser123 serves as a coordination point for S-adenosyl-L-methionine. Lys160 contributes to the GTP binding site. Residue Met194 coordinates S-adenosyl-L-methionine. Cys257 and Cys260 together coordinate [4Fe-4S] cluster. 262-264 (RLR) provides a ligand contact to GTP. Residue Cys274 coordinates [4Fe-4S] cluster.

This sequence belongs to the radical SAM superfamily. MoaA family. In terms of assembly, monomer and homodimer. Requires [4Fe-4S] cluster as cofactor.

It carries out the reaction GTP + AH2 + S-adenosyl-L-methionine = (8S)-3',8-cyclo-7,8-dihydroguanosine 5'-triphosphate + 5'-deoxyadenosine + L-methionine + A + H(+). The protein operates within cofactor biosynthesis; molybdopterin biosynthesis. Catalyzes the cyclization of GTP to (8S)-3',8-cyclo-7,8-dihydroguanosine 5'-triphosphate. The protein is GTP 3',8-cyclase of Escherichia coli O45:K1 (strain S88 / ExPEC).